Reading from the N-terminus, the 901-residue chain is MLIKLLTKVFGSRNDRTLRRMRKAVSLINAMEPEMEKLSDDELKAKTNEFRARIEKGESVESLIPEAFAVVREASKRVFGMRHFDVQLLGGMVLNDRCIAEMRTGEGKTLTATLPAYLNALSGKGVHVVTVNDYLAQRDAENNRPLFEFLGMSVGINLPGMPAPAKREAYAADITYGTNNEYGFDYLRDNMAFSPEERVQRKLHYALVDEVDSILIDEARTPLIISGPAEDSSEMYKKVNKIIPHLIRQEKEDSDTFQGEGHFSVDEKARQVNLTERGLVLIEELLVQEGIMDEGESLYSPGNIMLMHHVTAALRAHALFTRDVDYIVKDGEVIIVDEHTGRTMQGRRWSDGLHQAVEAKEGVEIQNENQTLASITFQNYFRLYEKLAGMTGTADTEAFEFSSIYKLDTVVVPTNRPMIRKDLPDLVYMTEAEKIQAIIEDIKERTANGQPVLVGTISIEKSEVVSRELTKAGIKHNVLNAKFHANEAGIVAQAGYPAAVTIATNMAGRGTDIMLGGSWQAEVAALEAPTEEQIAQIKADWQVRHDAVLAAGGLHIIGTERHESRRIDNQLRGRSGRQGDPGSSRFYLSMEDALMRIFASDRVSGMMRKLGMKPGEAIEHPWVTKAIANAQRKVESRNFDIRKQLLEYDDVANDQRRAIYTQRNELLDVSDVSDTINSIREDVFKETIDAYIPPQSLEEMWDIPGLQERLKNDFDLEMPIAEWLDKEPELHEETLRERILAQSIEVYQRKEEVVGAEMMRHFEKGVMLQTLDSLWKEHLAAMDYLRQGIHLRGYAQKDPKQEYKRESFAMFAAMLESLKYEVISTLSKVQVRMPEEVEAMEMQRREEAERLAQMQQLSHQDDDAAVAADLAAQTGERKIGRNDPCPCGSGKKYKQCHGRLS.

Residues Q87, 105–109, and D512 contribute to the ATP site; that span reads GEGKT. Zn(2+) is bound by residues C885, C887, C896, and H897.

It belongs to the SecA family. In terms of assembly, monomer and homodimer. Part of the essential Sec protein translocation apparatus which comprises SecA, SecYEG and auxiliary proteins SecDF-YajC and YidC. It depends on Zn(2+) as a cofactor.

The protein resides in the cell inner membrane. It localises to the cytoplasm. It carries out the reaction ATP + H2O + cellular proteinSide 1 = ADP + phosphate + cellular proteinSide 2.. Part of the Sec protein translocase complex. Interacts with the SecYEG preprotein conducting channel. Has a central role in coupling the hydrolysis of ATP to the transfer of proteins into and across the cell membrane, serving both as a receptor for the preprotein-SecB complex and as an ATP-driven molecular motor driving the stepwise translocation of polypeptide chains across the membrane. This Salmonella enteritidis PT4 (strain P125109) protein is Protein translocase subunit SecA.